Consider the following 120-residue polypeptide: MAEESRVPSSVSVTVAHDLLLAGHRYLDVRTPEEFSQGHACGAINVPYMNRGASGMSKNPDFLEQVSSHFGQSDNIIVGCQSGGRSIKATTDLLHAGFTGVKDIVGGYSAWAKNGLPTKA.

Residues 20 to 120 form the Rhodanese domain; that stretch reads LLAGHRYLDV…WAKNGLPTKA (101 aa). Residue Cys-80 is the Cysteine persulfide intermediate of the active site. Arg-85 lines the substrate pocket.

In terms of assembly, monomer.

It is found in the plastid. The protein localises to the chloroplast. The enzyme catalyses thiosulfate + hydrogen cyanide = thiocyanate + sulfite + 2 H(+). Functionally, thought to act during the early stages of leaf senescence. Catalyzes the transfer of a sulfur ion from a donor to cyanide or to other thiol compounds. Substrate preference is thiosulfate &gt; 3-mercaptopyruvate. In Arabidopsis thaliana (Mouse-ear cress), this protein is Thiosulfate sulfurtransferase 16, chloroplastic (STR16).